Here is a 700-residue protein sequence, read N- to C-terminus: Calpain-2 catalytic subunit (700 aa).

N-acetylalanine is present on alanine 2. The propeptide at 2 to 19 (AGIAMKLAKDREAAEGLG) is anchors to the small subunit. In terms of domain architecture, Calpain catalytic spans 45 to 344 (LFQDPSFPAL…YSRLEICNLT (300 aa)). Ca(2+) is bound by residues isoleucine 89, glycine 91, and aspartate 96. Residue cysteine 105 is part of the active site. Residues glutamate 175, glutamine 229, and lysine 230 each contribute to the Ca(2+) site. Active-site residues include histidine 262 and asparagine 286. Positions 292, 299, 319, and 323 each coordinate Ca(2+). The interval 345-514 (PDTLTCDSYK…KKADYQTVDD (170 aa)) is domain III. The tract at residues 515 to 529 (EIEANIEEIEANEED) is linker. The interval 530–700 (IGDGFRRLFA…LISWLSFSVL (171 aa)) is domain IV. Positions 542, 545, 547, 552, 585, 587, 589, 591, 596, 615, 617, 619, 621, 626, 658, and 661 each coordinate Ca(2+). EF-hand domains lie at 572 to 605 (FSIE…TKIQ) and 602 to 637 (TKIQ…AGFK). Residues 667 to 700 (VRLEILFKIFKQLDPENTGTIQLDLISWLSFSVL) form the EF-hand 3 domain.

It belongs to the peptidase C2 family. As to quaternary structure, forms a heterodimer with a small (regulatory) subunit (CAPNS1). Interacts with CPEB3; this leads to cleavage of CPEB3. Ca(2+) serves as cofactor. Ubiquitous.

It is found in the cytoplasm. The protein localises to the cell membrane. The enzyme catalyses Broad endopeptidase specificity.. Its activity is regulated as follows. Activated by 200-1000 micromolar concentrations of calcium and inhibited by calpastatin. Calcium-regulated non-lysosomal thiol-protease which catalyze limited proteolysis of substrates involved in cytoskeletal remodeling and signal transduction. Proteolytically cleaves MYOC at 'Arg-226'. Proteolytically cleaves CPEB3 following neuronal stimulation which abolishes CPEB3 translational repressor activity, leading to translation of CPEB3 target mRNAs. The sequence is that of Calpain-2 catalytic subunit (Capn2) from Rattus norvegicus (Rat).